The following is a 635-amino-acid chain: Rab11 family-interacting protein 4 (635 aa).

The region spanning 49–84 (GQGEEVEKLVKCLDPNDLGRINFKDFCRGVFAMKGC) is the EF-hand domain. Aspartate 62, asparagine 64, arginine 68, and aspartate 73 together coordinate Ca(2+). Positions 82-635 (KGCEELLKDV…HNPSILEIKH (554 aa)) are necessary for interaction with RAB11A, subcellular location, homo- or heterooligomerization. Disordered stretches follow at residues 147-176 (GPQE…EKEP) and 216-258 (EDYG…QTPR). Over residues 216-225 (EDYGEGDDVD) the composition is skewed to acidic residues. Residues 279 to 615 (KINLLNDLEA…EEINFRLRQY (337 aa)) adopt a coiled-coil conformation. Positions 572–634 (EAKNLFATQT…DHNPSILEIK (63 aa)) constitute an FIP-RBD domain.

As to quaternary structure, homodimer. Forms a complex with Rab11 (RAB11A or RAB11B) and ARF6. Interacts with RAB11A; the interaction is direct. Forms a heterooligomeric complex with RAB11FIP2, RAB11FIP3 and RAB11FIP5. Interacts with ECPAS. Strongly expressed in the developing retina. Expressed predominantly in neural tissues.

The protein resides in the recycling endosome membrane. It localises to the cleavage furrow. It is found in the midbody. Its subcellular location is the cytoplasmic vesicle. Acts as a regulator of endocytic traffic by participating in membrane delivery. Required for the abscission step in cytokinesis, possibly by acting as an 'address tag' delivering recycling endosome membranes to the cleavage furrow during late cytokinesis. May play a role in differentiation during retinal development, in a Rab11-independent manner. The chain is Rab11 family-interacting protein 4 (Rab11fip4) from Mus musculus (Mouse).